Here is a 434-residue protein sequence, read N- to C-terminus: UDP-glucose 6-dehydrogenase (434 aa).

Residues 2 to 19 (NITF…GVMM), Val-11, Asp-30, Lys-35, Thr-121, and Glu-152 contribute to the NAD(+) site. Residues 148-152 (EFLRE), Lys-204, Asn-208, 249-253 (FLNAG), and Gly-257 each bind substrate. Cys-260 (nucleophile) is an active-site residue. Lys-263 contacts NAD(+). Substrate is bound at residue Lys-321. Position 328 (Arg-328) interacts with NAD(+).

Belongs to the UDP-glucose/GDP-mannose dehydrogenase family.

The catalysed reaction is UDP-alpha-D-glucose + 2 NAD(+) + H2O = UDP-alpha-D-glucuronate + 2 NADH + 3 H(+). It functions in the pathway nucleotide-sugar biosynthesis; UDP-alpha-D-glucuronate biosynthesis; UDP-alpha-D-glucuronate from UDP-alpha-D-glucose: step 1/1. This is UDP-glucose 6-dehydrogenase (udg) from Rickettsia bellii (strain RML369-C).